The sequence spans 263 residues: Microtubule-associated protein RP/EB family member 1 (263 aa).

The region spanning 14-116 is the Calponin-homology (CH) domain; that stretch reads NLSRHDMLAW…FVQWFKKFFD (103 aa). The interval 150–182 is disordered; that stretch reads KPLGTGSAGPQRPIVAQRTPATPKGGTGMVKKA. Residues 180 to 250 form the EB1 C-terminal domain; that stretch reads KKAAGDDESA…LYATDEGFVI (71 aa).

This sequence belongs to the MAPRE family.

The protein resides in the cytoplasm. It is found in the cytoskeleton. Its subcellular location is the microtubule organizing center. It localises to the centrosome. The protein localises to the golgi apparatus. The protein resides in the spindle. It is found in the spindle pole. Its function is as follows. Plus-end tracking protein (+TIP) that binds to the plus-end of microtubules and regulates the dynamics of the microtubule cytoskeleton. Promotes cytoplasmic microtubule nucleation and elongation. Involved in mitotic spindle positioning by stabilizing microtubules and promoting dynamic connection between astral microtubules and the cortex during mitotic chromosome segregation. This Coturnix japonica (Japanese quail) protein is Microtubule-associated protein RP/EB family member 1 (MAPRE1).